Consider the following 771-residue polypeptide: Carnitine O-palmitoyltransferase 1, muscle isoform (771 aa).

Residues 1 to 47 are Cytoplasmic-facing; the sequence is MAEAHQAVAFQFTVTPEGVDFQLSREVLKHIYLSVIRSWKKRLIRIK. Residues 48–73 form a helical membrane-spanning segment; it reads NGILRGVYPGSPTSWLVVVMATAGSS. The Mitochondrial intermembrane portion of the chain corresponds to 74–101; sequence YYNVDISMGLVYYIQRWLPEGRPYRTPY. Residues 102–121 form a helical membrane-spanning segment; it reads TRTLFSMAIFSTGVWMMGIF. Residues 122–771 are Cytoplasmic-facing; that stretch reads FFRQTLKLLL…NLFQVPKADG (650 aa). The active-site Proton acceptor is the His472. CoA is bound at residue 554–566; it reads GKGLIKKCRTSPD. 2 residues coordinate (R)-carnitine: Tyr588 and Thr601.

This sequence belongs to the carnitine/choline acetyltransferase family.

It localises to the mitochondrion outer membrane. It catalyses the reaction (R)-carnitine + hexadecanoyl-CoA = O-hexadecanoyl-(R)-carnitine + CoA. It participates in lipid metabolism; fatty acid beta-oxidation. In terms of biological role, catalyzes the transfer of the acyl group of long-chain fatty acid-CoA conjugates onto carnitine, an essential step for the mitochondrial uptake of long-chain fatty acids and their subsequent beta-oxidation in the mitochondrion. This Bos taurus (Bovine) protein is Carnitine O-palmitoyltransferase 1, muscle isoform (CPT1B).